A 1558-amino-acid polypeptide reads, in one-letter code: Eukaryotic translation initiation factor 2-alpha kinase 1 (1558 aa).

One can recognise a Protein kinase domain in the interval 429 to 789 (FFEEKILGCG…AYNLLHESVL (361 aa)). Residues 435-443 (LGCGGFGYV) and Lys-458 contribute to the ATP site. Asp-660 functions as the Proton acceptor in the catalytic mechanism. The tract at residues 1014-1033 (GTSTNNNNNNNNNNMGNNNI) is disordered.

This sequence belongs to the protein kinase superfamily. Ser/Thr protein kinase family. GCN2 subfamily. In terms of processing, auto-phosphorylated.

It catalyses the reaction L-seryl-[protein] + ATP = O-phospho-L-seryl-[protein] + ADP + H(+). It carries out the reaction L-threonyl-[protein] + ATP = O-phospho-L-threonyl-[protein] + ADP + H(+). Its function is as follows. In blood stage parasites, phosphorylates translation factor eIF2alpha in response to amino acid starvation. During the asexual blood stage, involved in the response to the host hormone melatonin which is used by the parasite to modulate its cell cycle. This chain is Eukaryotic translation initiation factor 2-alpha kinase 1, found in Plasmodium falciparum (isolate 3D7).